A 78-amino-acid polypeptide reads, in one-letter code: U-scoloptoxin(15)-Ssm2a (78 aa).

Residues 1 to 23 (MEKKIIFLCFFVSLLTLPEFISS) form the signal peptide. Residues 34-37 (PEKK) are important for inhibition of KCNQ4. 2 cysteine pairs are disulfide-bonded: Cys44–Cys70 and Cys48–Cys72.

Belongs to the SLPTX(15) family. As to expression, expressed by the venom gland.

It is found in the secreted. The chain is U-scoloptoxin(15)-Ssm2a from Scolopendra mutilans (Chinese red-headed centipede).